The chain runs to 488 residues: Phenylalanine--tRNA ligase alpha subunit (488 aa).

Residues threonine 315, 354–356 (QLD), phenylalanine 394, and phenylalanine 419 each bind L-phenylalanine.

It belongs to the class-II aminoacyl-tRNA synthetase family. Phe-tRNA synthetase alpha subunit type 2 subfamily. In terms of assembly, tetramer of two alpha and two beta subunits. Mg(2+) is required as a cofactor.

The protein resides in the cytoplasm. The catalysed reaction is tRNA(Phe) + L-phenylalanine + ATP = L-phenylalanyl-tRNA(Phe) + AMP + diphosphate + H(+). The sequence is that of Phenylalanine--tRNA ligase alpha subunit from Pyrobaculum calidifontis (strain DSM 21063 / JCM 11548 / VA1).